The primary structure comprises 336 residues: Retinol dehydrogenase 10-B (336 aa).

Residues 7–27 (LFVVTFKIIWSFVLAGAKWFI) traverse the membrane as a helical; Signal-anchor segment. 40-64 (VITGAGSGLGRLFALEFARRRATLV) provides a ligand contact to NADP(+). Serine 192 is a binding site for substrate. Tyrosine 205 (proton acceptor) is an active-site residue.

Belongs to the short-chain dehydrogenases/reductases (SDR) family.

It localises to the microsome membrane. The protein localises to the endoplasmic reticulum membrane. It catalyses the reaction all-trans-retinol + NADP(+) = all-trans-retinal + NADPH + H(+). Its pathway is cofactor metabolism; retinol metabolism. Its function is as follows. Retinol dehydrogenase with a clear preference for NADP. Converts all-trans-retinol to all-trans-retinal. Has no detectable activity towards 11-cis-retinol, 9-cis-retinol and 13-cis-retinol. The polypeptide is Retinol dehydrogenase 10-B (rdh10b) (Danio rerio (Zebrafish)).